The following is an 875-amino-acid chain: Alanine--tRNA ligase (875 aa).

Positions 565, 569, 666, and 670 each coordinate Zn(2+).

The protein belongs to the class-II aminoacyl-tRNA synthetase family. Requires Zn(2+) as cofactor.

The protein localises to the cytoplasm. The enzyme catalyses tRNA(Ala) + L-alanine + ATP = L-alanyl-tRNA(Ala) + AMP + diphosphate. In terms of biological role, catalyzes the attachment of alanine to tRNA(Ala) in a two-step reaction: alanine is first activated by ATP to form Ala-AMP and then transferred to the acceptor end of tRNA(Ala). Also edits incorrectly charged Ser-tRNA(Ala) and Gly-tRNA(Ala) via its editing domain. In Leptothrix cholodnii (strain ATCC 51168 / LMG 8142 / SP-6) (Leptothrix discophora (strain SP-6)), this protein is Alanine--tRNA ligase.